The sequence spans 358 residues: Probable G-protein coupled receptor 25 (358 aa).

Residues 1 to 43 (MQSTEPWSPSWGTLSWDYSGSGSLDQVELCPAWNLPYGHAIIP) are Extracellular-facing. Residues 44 to 64 (ALYLAAFAVGLPGNAFVVWLL) form a helical membrane-spanning segment. At 65–76 (SRQRGPRRLVDT) the chain is on the cytoplasmic side. The helical transmembrane segment at 77–97 (FVLHLAAADLGFVLTLPLWAA) threads the bilayer. Residues 98-113 (AEARGGLWPFGDGLCK) are Extracellular-facing. Cys-112 and Cys-191 form a disulfide bridge. The chain crosses the membrane as a helical span at residues 114–134 (VSSFALAVTRCAGALLLAGMS). Over 135 to 155 (VDRYLAVGRPLSARPLRSARC) the chain is Cytoplasmic. The helical transmembrane segment at 156–176 (VRAVCGAAWAAAFLAGLPALL) threads the bilayer. Over 177 to 200 (YRGLQPSLDGVGSQCAEEPWEALQ) the chain is Extracellular. The helical transmembrane segment at 201 to 221 (GVGLLLLLLTFALPLAVTLIC) threads the bilayer. Over 222 to 239 (YWRVSRRLPRVGRARSNS) the chain is Cytoplasmic. A helical membrane pass occupies residues 240 to 260 (LRIIFTVESVFVGCWLPFGVL). Residues 261–284 (RSLFHLARLQALPLPCSLLLALRW) lie on the Extracellular side of the membrane. The helical transmembrane segment at 285–307 (GLTVTTCLAFVNSSANPVIYLLL) threads the bilayer. Over 308 to 358 (DRSFRARARFGLCARAGRQVRRISSASSLSRDDSSVFRGRSPKVNSASATW) the chain is Cytoplasmic. The disordered stretch occupies residues 339–358 (DDSSVFRGRSPKVNSASATW).

The protein belongs to the G-protein coupled receptor 1 family.

The protein resides in the membrane. Orphan receptor. This is Probable G-protein coupled receptor 25 (Gpr25) from Mus musculus (Mouse).